A 166-amino-acid polypeptide reads, in one-letter code: Large ribosomal subunit protein uL10 (166 aa).

Belongs to the universal ribosomal protein uL10 family. In terms of assembly, part of the ribosomal stalk of the 50S ribosomal subunit. The N-terminus interacts with L11 and the large rRNA to form the base of the stalk. The C-terminus forms an elongated spine to which L12 dimers bind in a sequential fashion forming a multimeric L10(L12)X complex.

Functionally, forms part of the ribosomal stalk, playing a central role in the interaction of the ribosome with GTP-bound translation factors. The protein is Large ribosomal subunit protein uL10 of Bacillus cereus (strain ATCC 14579 / DSM 31 / CCUG 7414 / JCM 2152 / NBRC 15305 / NCIMB 9373 / NCTC 2599 / NRRL B-3711).